The chain runs to 345 residues: Fructose-bisphosphate aldolase (345 aa).

Ser53 is a D-glyceraldehyde 3-phosphate binding site. Asp95 serves as the catalytic Proton donor. Residues His96, Asp131, Glu161, and His212 each coordinate Zn(2+). Gly213 provides a ligand contact to dihydroxyacetone phosphate. His252 is a binding site for Zn(2+). Dihydroxyacetone phosphate-binding positions include Gly253–Ser255 and Asn274–Thr277.

This sequence belongs to the class II fructose-bisphosphate aldolase family. Zn(2+) is required as a cofactor.

The catalysed reaction is beta-D-fructose 1,6-bisphosphate = D-glyceraldehyde 3-phosphate + dihydroxyacetone phosphate. The protein operates within carbohydrate degradation; glycolysis; D-glyceraldehyde 3-phosphate and glycerone phosphate from D-glucose: step 4/4. Its function is as follows. Catalyzes the aldol condensation of dihydroxyacetone phosphate (DHAP or glycerone-phosphate) with glyceraldehyde 3-phosphate (G3P) to form fructose 1,6-bisphosphate (FBP) in gluconeogenesis and the reverse reaction in glycolysis. The sequence is that of Fructose-bisphosphate aldolase (fba) from Mycobacterium leprae (strain TN).